The sequence spans 616 residues: 2-isopropylmalate synthase (616 aa).

A disordered region spans residues 1-34 (MSPNDAFISAPAKIETPVGPRNEGQPAWNKQRGS). Residues 67 to 341 (PQWCAVDLRD…DPQLDFTDIR (275 aa)) enclose the Pyruvate carboxyltransferase domain. Mg(2+) contacts are provided by Asp-76, His-280, His-282, and Asn-316. A regulatory domain region spans residues 490 to 616 (RTAPVEQIAL…NHEAVLAGGV (127 aa)).

Belongs to the alpha-IPM synthase/homocitrate synthase family. LeuA type 2 subfamily. Homodimer. It depends on Mg(2+) as a cofactor.

It is found in the cytoplasm. It catalyses the reaction 3-methyl-2-oxobutanoate + acetyl-CoA + H2O = (2S)-2-isopropylmalate + CoA + H(+). Its pathway is amino-acid biosynthesis; L-leucine biosynthesis; L-leucine from 3-methyl-2-oxobutanoate: step 1/4. Inhibited by L-leucine, the pathway end product. Functionally, catalyzes the condensation of the acetyl group of acetyl-CoA with 3-methyl-2-oxobutanoate (2-ketoisovalerate) to form 3-carboxy-3-hydroxy-4-methylpentanoate (2-isopropylmalate). Complements an E.coli leuA deletion. This is 2-isopropylmalate synthase from Corynebacterium glutamicum (strain ATCC 13032 / DSM 20300 / JCM 1318 / BCRC 11384 / CCUG 27702 / LMG 3730 / NBRC 12168 / NCIMB 10025 / NRRL B-2784 / 534).